The following is a 537-amino-acid chain: Glucans biosynthesis protein D 2 (537 aa).

Residues 1–28 constitute a signal peptide (tat-type signal); sequence MVTRRHLLASASLSATLAALGITPEALA.

Belongs to the OpgD/OpgG family. In terms of processing, predicted to be exported by the Tat system. The position of the signal peptide cleavage has not been experimentally proven.

It is found in the periplasm. Its pathway is glycan metabolism; osmoregulated periplasmic glucan (OPG) biosynthesis. In terms of biological role, probably involved in the control of the structural glucose backbone of osmoregulated periplasmic glucans (OPGs). This Ralstonia nicotianae (strain ATCC BAA-1114 / GMI1000) (Ralstonia solanacearum) protein is Glucans biosynthesis protein D 2 (opgD2).